A 331-amino-acid polypeptide reads, in one-letter code: Glycerophosphodiester phosphodiesterase 1 (331 aa).

The Cytoplasmic segment spans residues 1 to 3; sequence MWL. A helical transmembrane segment spans residues 4–24; sequence WEDQGGLLGPFSFLLLVLLLV. Residues 25 to 247 lie on the Lumenal side of the membrane; it reads TRSPVNACLL…KPRYDTFWKH (223 aa). The 267-residue stretch at 65-331 folds into the GP-PDE domain; it reads ISAIAHRGGS…SMVEDCEPHF (267 aa). The Mg(2+) site is built by Glu97 and Asp99. Asn168 carries an N-linked (GlcNAc...) asparagine glycan. Asp174 provides a ligand contact to Mg(2+). N-linked (GlcNAc...) asparagine glycosylation is present at Asn198. The helical transmembrane segment at 248 to 268 threads the bilayer; that stretch reads FIFVMMDILLDWSMHNILWYL. Over 269–331 the chain is Cytoplasmic; it reads CGISAFLMQK…SMVEDCEPHF (63 aa).

It belongs to the glycerophosphoryl diester phosphodiesterase family. Interacts with PRAF2. Interacts with RGS16. It depends on Mg(2+) as a cofactor. In terms of processing, N-glycosylated. Widely expressed.

It is found in the cell membrane. The protein resides in the cytoplasmic vesicle membrane. It catalyses the reaction sn-glycero-3-phospho-1D-myo-inositol + H2O = myo-inositol + sn-glycerol 3-phosphate + H(+). The enzyme catalyses 1-O-(1Z-octadecenyl)-sn-glycero-3-phospho-(N-5Z,8Z,11Z,14Z-eicosatetraenoyl)-ethanolamine + H2O = 1-O-(1Z-octadecenyl)-sn-glycero-3-phosphate + N-(5Z,8Z,11Z,14Z-eicosatetraenoyl)-ethanolamine + H(+). The catalysed reaction is 1-O-(1Z-octadecenyl)-sn-glycero-3-phospho-(N-9Z-octadecenoyl)-ethanolamine + H2O = 1-O-(1Z-octadecenyl)-sn-glycero-3-phosphate + N-(9Z-octadecenoyl) ethanolamine + H(+). It carries out the reaction 1-O-(1Z-octadecenyl)-sn-glycero-3-phospho-N-hexadecanoyl-ethanolamine + H2O = 1-O-(1Z-octadecenyl)-sn-glycero-3-phosphate + N-hexadecanoylethanolamine + H(+). It catalyses the reaction N-(4Z,7Z,10Z,13Z,16Z,19Z)-docosahexaenoyl-sn-glycero-3-phosphoethanolamine + H2O = N-(4Z,7Z,10Z,13Z,16Z,19Z)-docosahexaenoyl ethanolamine + sn-glycerol 3-phosphate + H(+). The enzyme catalyses N-eicosanoyl-sn-glycero-3-phosphoethanolamine + H2O = N-eicosanoyl ethanolamine + sn-glycerol 3-phosphate + H(+). The catalysed reaction is N-hexadecanoyl-sn-glycero-3-phosphoethanolamine + H2O = N-hexadecanoylethanolamine + sn-glycerol 3-phosphate + H(+). It carries out the reaction N-(9Z-octadecenoyl)-sn-glycero-3-phosphoethanolamine + H2O = N-(9Z-octadecenoyl) ethanolamine + sn-glycerol 3-phosphate + H(+). It catalyses the reaction N-(5Z,8Z,11Z,14Z-eicosatetraenoyl)-sn-glycero-3-phosphoethanolamine + H2O = N-(5Z,8Z,11Z,14Z-eicosatetraenoyl)-ethanolamine + sn-glycerol 3-phosphate + H(+). With respect to regulation, inhibited by EDTA, calcium chloride, and zinc chloride. Enhanced by magnesium chloride. Glycerophosphodiester phosphodiesterase activity can be modulated by G-protein signaling pathways. Hydrolyzes the phosphodiester bond of glycerophosphodiesters such as glycerophosphoinositol (GroPIns) and glycerophosphoethanolamine (GroPEth), to yield a glycerol phosphate and an alcohol. Hydrolyzes glycerophospho-N-acylethanolamines to N-acylethanolamines in the brain and participates in bioactive N-acylethanolamine biosynthesis such as anandamide (an endocannabinoid), N-palmitoylethanolamine (an anti-inflammatory), and N-oleoylethanolamine (an anorexic). In addition, has a lysophospholipase D activity by hydrolyzing N-acyl-lysoplasmenylethanolamine (N-acyl-lysoPlsEt) to N-acylethanolamine. However lysophospholipase D activity is lower than glycerophosphodiester phosphodiesterase activity. Has little or no activity towards glycerophosphocholine. The chain is Glycerophosphodiester phosphodiesterase 1 from Homo sapiens (Human).